We begin with the raw amino-acid sequence, 295 residues long: Bifunctional protein FolD (295 aa).

Residues 164-166 (GRS), S193, and I234 contribute to the NADP(+) site.

This sequence belongs to the tetrahydrofolate dehydrogenase/cyclohydrolase family. In terms of assembly, homodimer.

It carries out the reaction (6R)-5,10-methylene-5,6,7,8-tetrahydrofolate + NADP(+) = (6R)-5,10-methenyltetrahydrofolate + NADPH. The enzyme catalyses (6R)-5,10-methenyltetrahydrofolate + H2O = (6R)-10-formyltetrahydrofolate + H(+). The protein operates within one-carbon metabolism; tetrahydrofolate interconversion. Functionally, catalyzes the oxidation of 5,10-methylenetetrahydrofolate to 5,10-methenyltetrahydrofolate and then the hydrolysis of 5,10-methenyltetrahydrofolate to 10-formyltetrahydrofolate. The polypeptide is Bifunctional protein FolD (Flavobacterium johnsoniae (strain ATCC 17061 / DSM 2064 / JCM 8514 / BCRC 14874 / CCUG 350202 / NBRC 14942 / NCIMB 11054 / UW101) (Cytophaga johnsonae)).